The chain runs to 163 residues: Transcription antitermination protein NusB (163 aa).

Belongs to the NusB family.

Involved in transcription antitermination. Required for transcription of ribosomal RNA (rRNA) genes. Binds specifically to the boxA antiterminator sequence of the ribosomal RNA (rrn) operons. The polypeptide is Transcription antitermination protein NusB (Granulibacter bethesdensis (strain ATCC BAA-1260 / CGDNIH1)).